The chain runs to 103 residues: Large ribosomal subunit protein bL21 (103 aa).

The protein belongs to the bacterial ribosomal protein bL21 family. As to quaternary structure, part of the 50S ribosomal subunit. Contacts protein L20.

In terms of biological role, this protein binds to 23S rRNA in the presence of protein L20. The protein is Large ribosomal subunit protein bL21 of Mycobacterium tuberculosis (strain ATCC 25618 / H37Rv).